The primary structure comprises 228 residues: UPF0173 metal-dependent hydrolase PTH_1415 (228 aa).

It belongs to the UPF0173 family.

This is UPF0173 metal-dependent hydrolase PTH_1415 from Pelotomaculum thermopropionicum (strain DSM 13744 / JCM 10971 / SI).